The chain runs to 220 residues: Large ribosomal subunit protein uL1 (220 aa).

Belongs to the universal ribosomal protein uL1 family. Part of the 50S ribosomal subunit.

Functionally, binds directly to 23S rRNA. The L1 stalk is quite mobile in the ribosome, and is involved in E site tRNA release. In terms of biological role, protein L1 is also a translational repressor protein, it controls the translation of the L11 operon by binding to its mRNA. This Ehrlichia ruminantium (strain Gardel) protein is Large ribosomal subunit protein uL1.